The primary structure comprises 689 residues: Glycine--tRNA ligase beta subunit (689 aa).

Belongs to the class-II aminoacyl-tRNA synthetase family. As to quaternary structure, tetramer of two alpha and two beta subunits.

The protein localises to the cytoplasm. It carries out the reaction tRNA(Gly) + glycine + ATP = glycyl-tRNA(Gly) + AMP + diphosphate. In Photobacterium profundum (strain SS9), this protein is Glycine--tRNA ligase beta subunit.